Consider the following 212-residue polypeptide: Large ribosomal subunit protein bL25 (212 aa).

Residues 1-16 (MKTRIDLTVEPRETGK) are compositionally biased toward basic and acidic residues. The segment at 1 to 22 (MKTRIDLTVEPRETGKHNSRGL) is disordered.

The protein belongs to the bacterial ribosomal protein bL25 family. CTC subfamily. In terms of assembly, part of the 50S ribosomal subunit; part of the 5S rRNA/L5/L18/L25 subcomplex. Contacts the 5S rRNA. Binds to the 5S rRNA independently of L5 and L18.

Its function is as follows. This is one of the proteins that binds to the 5S RNA in the ribosome where it forms part of the central protuberance. The sequence is that of Large ribosomal subunit protein bL25 from Bdellovibrio bacteriovorus (strain ATCC 15356 / DSM 50701 / NCIMB 9529 / HD100).